An 896-amino-acid chain; its full sequence is Rho GTPase-activating protein gacM (896 aa).

Residues 1–97 (MSSFIGWKKN…SSNDTIGKSS (97 aa)) form a disordered region. The segment covering 10–26 (NSNSGGTPGASPTSSSP) has biased composition (low complexity). Positions 27-38 (LNSTISNANSVS) are enriched in polar residues. Composition is skewed to low complexity over residues 45-57 (SISN…LSSS) and 65-97 (NSNN…GKSS). The region spanning 139 to 330 (QPINPNTEFG…LWIEEFDMIS (192 aa)) is the Rho-GAP domain. Low complexity-rich tracts occupy residues 375–391 (IQQQ…QSHP), 400–427 (SSLS…LLPT), 448–460 (PTPT…TPQT), and 473–506 (NNNS…NNNN). Disordered stretches follow at residues 375-514 (IQQQ…GSPL) and 701-770 (LPTG…ENQI). A compositionally biased stretch (polar residues) spans 702 to 711 (PTGSSWSDFE). Composition is skewed to low complexity over residues 712-743 (NNSS…NSSP) and 751-761 (SNGLNSSSNSN).

The protein resides in the cytoplasm. Its function is as follows. Rho GTPase-activating protein involved in the signal transduction pathway. This is Rho GTPase-activating protein gacM (gacM) from Dictyostelium discoideum (Social amoeba).